We begin with the raw amino-acid sequence, 154 residues long: Large ribosomal subunit protein uL13 (154 aa).

Belongs to the universal ribosomal protein uL13 family. As to quaternary structure, part of the 50S ribosomal subunit.

This protein is one of the early assembly proteins of the 50S ribosomal subunit, although it is not seen to bind rRNA by itself. It is important during the early stages of 50S assembly. In Bartonella quintana (strain Toulouse) (Rochalimaea quintana), this protein is Large ribosomal subunit protein uL13.